The primary structure comprises 328 residues: dITP/XTP pyrophosphatase (328 aa).

The interval 1–129 is unknown; sequence MSEKIYEYKD…ATSEQGFGDI (129 aa). An NTP pyrophosphatase region spans residues 130-324; the sequence is ILIATRNEGK…KLMEVFPAWQ (195 aa). Residue 134 to 139 participates in substrate binding; it reads TRNEGK. Residue aspartate 196 is the Proton acceptor of the active site. Residue aspartate 196 participates in Mg(2+) binding. Substrate is bound by residues serine 197, 280–283, lysine 303, and 308–309; these read FGYD and HR.

Belongs to the HAM1 NTPase family. In terms of assembly, homodimer. Requires Mg(2+) as cofactor.

The enzyme catalyses XTP + H2O = XMP + diphosphate + H(+). It carries out the reaction dITP + H2O = dIMP + diphosphate + H(+). It catalyses the reaction ITP + H2O = IMP + diphosphate + H(+). In terms of biological role, pyrophosphatase that catalyzes the hydrolysis of nucleoside triphosphates to their monophosphate derivatives, with a high preference for the non-canonical purine nucleotides XTP (xanthosine triphosphate), dITP (deoxyinosine triphosphate) and ITP. Seems to function as a house-cleaning enzyme that removes non-canonical purine nucleotides from the nucleotide pool, thus preventing their incorporation into DNA/RNA and avoiding chromosomal lesions. The polypeptide is dITP/XTP pyrophosphatase (Streptococcus pyogenes serotype M1).